The sequence spans 199 residues: NADH-quinone oxidoreductase subunit C (199 aa).

It belongs to the complex I 30 kDa subunit family. As to quaternary structure, NDH-1 is composed of 14 different subunits. Subunits NuoB, C, D, E, F, and G constitute the peripheral sector of the complex.

It localises to the cell inner membrane. It carries out the reaction a quinone + NADH + 5 H(+)(in) = a quinol + NAD(+) + 4 H(+)(out). In terms of biological role, NDH-1 shuttles electrons from NADH, via FMN and iron-sulfur (Fe-S) centers, to quinones in the respiratory chain. The immediate electron acceptor for the enzyme in this species is believed to be ubiquinone. Couples the redox reaction to proton translocation (for every two electrons transferred, four hydrogen ions are translocated across the cytoplasmic membrane), and thus conserves the redox energy in a proton gradient. In Cupriavidus metallidurans (strain ATCC 43123 / DSM 2839 / NBRC 102507 / CH34) (Ralstonia metallidurans), this protein is NADH-quinone oxidoreductase subunit C.